The primary structure comprises 141 residues: Lutropin subunit beta (141 aa).

The N-terminal stretch at 1–21 (MERYQELTVLLLLLLLEGGSG) is a signal peptide. 6 cysteine pairs are disulfide-bonded: C30–C78, C44–C93, C47–C131, C55–C109, C59–C111, and C114–C121. A glycan (N-linked (GlcNAc...) asparagine) is linked at N34.

The protein belongs to the glycoprotein hormones subunit beta family. Heterodimer of a common alpha chain and a unique beta chain which confers biological specificity to thyrotropin, lutropin, follitropin and gonadotropin.

It is found in the secreted. Functionally, promotes spermatogenesis and ovulation by stimulating the testes and ovaries to synthesize steroids. The chain is Lutropin subunit beta (LHB) from Monodelphis domestica (Gray short-tailed opossum).